The following is a 175-amino-acid chain: ATP synthase subunit delta (175 aa).

It belongs to the ATPase delta chain family. As to quaternary structure, F-type ATPases have 2 components, F(1) - the catalytic core - and F(0) - the membrane proton channel. F(1) has five subunits: alpha(3), beta(3), gamma(1), delta(1), epsilon(1). F(0) has three main subunits: a(1), b(2) and c(10-14). The alpha and beta chains form an alternating ring which encloses part of the gamma chain. F(1) is attached to F(0) by a central stalk formed by the gamma and epsilon chains, while a peripheral stalk is formed by the delta and b chains.

The protein localises to the cell inner membrane. In terms of biological role, f(1)F(0) ATP synthase produces ATP from ADP in the presence of a proton or sodium gradient. F-type ATPases consist of two structural domains, F(1) containing the extramembraneous catalytic core and F(0) containing the membrane proton channel, linked together by a central stalk and a peripheral stalk. During catalysis, ATP synthesis in the catalytic domain of F(1) is coupled via a rotary mechanism of the central stalk subunits to proton translocation. This protein is part of the stalk that links CF(0) to CF(1). It either transmits conformational changes from CF(0) to CF(1) or is implicated in proton conduction. The polypeptide is ATP synthase subunit delta (Sulfurovum sp. (strain NBC37-1)).